Consider the following 791-residue polypeptide: KN motif and ankyrin repeat domain-containing protein 3 (791 aa).

Disordered stretches follow at residues 1–37 (MAKF…SVET), 56–181 (RGPA…GPAQ), 254–312 (ATSD…ETRE), 401–425 (GCTE…GDEM), and 463–514 (YESS…GDCE). Positions 25–34 (SARSPSSPYS) are enriched in polar residues. Residues 105–125 (LSPGAFPGLSLPPLSPRSLSR) show a composition bias toward low complexity. Residues 127 to 149 (PRVEHTLLETSRRLEQAQARERA) are compositionally biased toward basic and acidic residues. 6 positions are modified to phosphoserine: Ser151, Ser159, Ser163, Ser166, Ser167, and Ser176. Residues 158–180 (RSPRGSGRSSPAPNPALASPGPA) show a composition bias toward low complexity. Residues 180–229 (AQLQLVREQMAAALRRLRELEDQARALPELQEQVRALRAEKARLLAGRVQ) are a coiled coil. Basic and acidic residues-rich tracts occupy residues 254–280 (ATSD…RRSE) and 293–312 (PDGE…ETRE). Ser279 bears the Phosphoserine mark. Positions 401–410 (GCTEKTTQTE) are enriched in polar residues. Over residues 485–496 (SSSSGSDDSSGG) the composition is skewed to low complexity. Residues 505–514 (HNDKDAGDCE) are compositionally biased toward basic and acidic residues. 5 ANK repeats span residues 606 to 636 (NGNT…DVNH), 640 to 677 (AGYS…AKAS), 679 to 708 (TGQT…DVNV), 712 to 742 (DGAT…DLTI), and 746 to 775 (EGTS…SNHQ). Residues 772–783 (SNHQGQSSTGSP) show a composition bias toward polar residues. Positions 772–791 (SNHQGQSSTGSPTAKECNDK) are disordered.

In terms of biological role, may be involved in the control of cytoskeleton formation by regulating actin polymerization. The chain is KN motif and ankyrin repeat domain-containing protein 3 from Mus musculus (Mouse).